Reading from the N-terminus, the 346-residue chain is Blue-light-activated histidine kinase 2 (346 aa).

Positions 8–82 constitute a PAS domain; it reads HDKEAWGRLP…KAIRNCEEVE (75 aa). Cys-55 carries the S-4a-FMN cysteine modification. The region spanning 79–133 is the PAC domain; sequence EEVEETIYNYRADGEGFWNHLLMGPLEDQDEKCRYFVGIQVDMGQSESPDRATEL. Residues 139–334 form the Histidine kinase domain; that stretch reads EVQHRVKNHL…IVNIDIPLSQ (196 aa). His-142 bears the Phosphohistidine; by autocatalysis mark.

In terms of processing, FMN binds covalently to cysteine after exposure to blue light and this bond is spontaneously broken in the dark.

It catalyses the reaction ATP + protein L-histidine = ADP + protein N-phospho-L-histidine.. Photosensitive kinase that is involved in increased bacterial virulence upon exposure to light. The polypeptide is Blue-light-activated histidine kinase 2 (Erythrobacter litoralis (strain HTCC2594)).